We begin with the raw amino-acid sequence, 320 residues long: GPI-specific phospholipase A2-like PGAP3 (320 aa).

Positions 1-23 (MAKRTAPLLLLTLAVGLAGGSQG) are cleaved as a signal peptide. Topologically, residues 24-98 (DREPVYRDCV…QFHGKWPFSR (75 aa)) are lumenal. Asn40 carries an N-linked (GlcNAc...) asparagine glycan. Residues 99–119 (FLFIQEPASAVASLLNGLASL) traverse the membrane as a helical segment. Topologically, residues 120–135 (VMLCRYRASVPASSPM) are cytoplasmic. The chain crosses the membrane as a helical span at residues 136–156 (YHTCMAFAWVSLNAWFWSTVF). The Lumenal segment spans residues 157 to 169 (HTRDTDLTEKMDY). Residues 170–190 (FCASAVILHSVYLCCVRTVGL) traverse the membrane as a helical segment. Residues 191–198 (QHPSVASA) are Cytoplasmic-facing. A helical transmembrane segment spans residues 199-219 (FGALLLLLLTGHISYLSLVHF). Over 220–223 (DYGY) the chain is Lumenal. The helical transmembrane segment at 224–244 (NMMANVAIGLVNLAWWLVWCL) threads the bilayer. The Cytoplasmic portion of the chain corresponds to 245-257 (RNRQRLPHTRRCM). The chain crosses the membrane as a helical span at residues 258 to 278 (VVVVLLQGLSLLELLDFPPLF). Position 279 (Trp279) is a topological domain, lumenal. The helical transmembrane segment at 280 to 299 (VLDAHAIWHISTIPVHTLFF) threads the bilayer. Over 300–320 (RFLEDDSLYLLKESGAMFKLD) the chain is Cytoplasmic.

It belongs to the PGAP3 family.

It is found in the golgi apparatus membrane. Its function is as follows. Involved in the fatty acid remodeling steps of GPI-anchor maturation where the unsaturated acyl chain at sn-2 of inositol phosphate is replaced by a saturated stearoyl chain. May catalyze the first step of the fatty acid remodeling, by removing the unsaturated acyl chain at sn-2 of inositol phosphate, generating a lyso-GPI intermediate. The fatty acid remodeling steps is critical for the integration of GPI-APs into lipid rafts. This Mus musculus (Mouse) protein is GPI-specific phospholipase A2-like PGAP3.